A 258-amino-acid polypeptide reads, in one-letter code: Snake venom serine protease 5 (258 aa).

The signal sequence occupies residues 1 to 18 (MVLIRVLANLLILQLSYA). Residues 19 to 24 (QKSSEL) constitute a propeptide that is removed on maturation. A Peptidase S1 domain is found at 25–249 (VVGGRPCNIN…HLDWIQNIIA (225 aa)). 6 cysteine pairs are disulfide-bonded: C31–C163, C50–C66, C98–C256, C142–C210, C174–C189, and C200–C225. N44 carries an N-linked (GlcNAc...) asparagine glycan. Residue H65 is the Charge relay system of the active site. An N-linked (GlcNAc...) asparagine glycan is attached at N103. The active-site Charge relay system is D110. N121, N122, N154, and N170 each carry an N-linked (GlcNAc...) asparagine glycan. S204 (charge relay system) is an active-site residue. The N-linked (GlcNAc...) asparagine glycan is linked to N251.

It belongs to the peptidase S1 family. Snake venom subfamily. As to quaternary structure, monomer. In terms of tissue distribution, expressed by the venom gland.

The protein resides in the secreted. Its function is as follows. Snake venom serine protease that may act in the hemostasis system of the prey. The sequence is that of Snake venom serine protease 5 from Trimeresurus stejnegeri (Chinese green tree viper).